A 352-amino-acid chain; its full sequence is Phosphate acyltransferase (352 aa).

The span at 328-339 shows a compositional bias: basic and acidic residues; sequence ESFPGDAREREG. The segment at 328-352 is disordered; that stretch reads ESFPGDAREREGAPAPDAGTERVAS.

It belongs to the PlsX family. Homodimer. Probably interacts with PlsY.

The protein resides in the cytoplasm. The catalysed reaction is a fatty acyl-[ACP] + phosphate = an acyl phosphate + holo-[ACP]. The protein operates within lipid metabolism; phospholipid metabolism. Its function is as follows. Catalyzes the reversible formation of acyl-phosphate (acyl-PO(4)) from acyl-[acyl-carrier-protein] (acyl-ACP). This enzyme utilizes acyl-ACP as fatty acyl donor, but not acyl-CoA. The sequence is that of Phosphate acyltransferase from Citrifermentans bemidjiense (strain ATCC BAA-1014 / DSM 16622 / JCM 12645 / Bem) (Geobacter bemidjiensis).